The primary structure comprises 433 residues: Ribosome biogenesis protein WDR12 homolog (433 aa).

The tract at residues 21 to 102 is ubiquitin-like (UBL) domain; that stretch reads VEVFVVSYRH…ESVISIECIV (82 aa). WD repeat units lie at residues 114–151, 153–194, 203–242, 270–310, 312–351, 357–397, and 401–433; these read ALLD…LTSS, LHEE…SSTF, GHER…TSTV, GHKD…QINT, AAKK…GTLV, GHCG…TPLY, and GHSD…RRKM.

Belongs to the WD repeat WDR12/YTM1 family.

The protein resides in the nucleus. It is found in the nucleolus. It localises to the nucleoplasm. Required for maturation of ribosomal RNAs and formation of the large ribosomal subunit. This chain is Ribosome biogenesis protein WDR12 homolog, found in Brugia malayi (Filarial nematode worm).